The following is a 146-amino-acid chain: ATP synthase epsilon chain 2 (146 aa).

It belongs to the ATPase epsilon chain family. In terms of assembly, F-type ATPases have 2 components, CF(1) - the catalytic core - and CF(0) - the membrane proton channel. CF(1) has five subunits: alpha(3), beta(3), gamma(1), delta(1), epsilon(1). CF(0) has three main subunits: a, b and c.

It is found in the cell inner membrane. Produces ATP from ADP in the presence of a proton gradient across the membrane. The polypeptide is ATP synthase epsilon chain 2 (Cereibacter sphaeroides (strain ATCC 17023 / DSM 158 / JCM 6121 / CCUG 31486 / LMG 2827 / NBRC 12203 / NCIMB 8253 / ATH 2.4.1.) (Rhodobacter sphaeroides)).